Here is a 257-residue protein sequence, read N- to C-terminus: RING1 and YY1-binding protein B (257 aa).

2 disordered regions span residues 1 to 24 (MGDK…GFWD) and 45 to 257 (RKGT…DESF). A RanBP2-type zinc finger spans residues 19–48 (DNGFWDCSVCTFRNSAEAFKCSICDVRKGT). The span at 74 to 129 (PKKEKKEKPERPEKDRAEEERPDINPPDEHPVEQRDKDKSEKEQPEKEKKDREKEI) shows a compositional bias: basic and acidic residues. The span at 149-168 (HQSPPSERNSIQSGKSTTKT) shows a compositional bias: polar residues. Residues 169–178 (KNSHNSRPKL) are compositionally biased toward basic residues. The span at 209–233 (TSSTSSSTVTSSASSEQQHQSSGSE) shows a compositional bias: low complexity.

The protein resides in the nucleus. It is found in the cytoplasm. May be implicated in the regulation of the transcription as a repressor of the transcriptional activity of E4TF1. The sequence is that of RING1 and YY1-binding protein B (rybpb) from Danio rerio (Zebrafish).